The following is a 197-amino-acid chain: Holliday junction branch migration complex subunit RuvA (197 aa).

The tract at residues 1–63 is domain I; sequence MFEYLNGKLV…EDAHSLYGFV (63 aa). The tract at residues 64-142 is domain II; it reads NESEKALFLR…ATGAVGISLL (79 aa). The tract at residues 142-146 is flexible linker; sequence LDAAP. The interval 147–197 is domain III; that stretch reads ASNLALEEAIEALQALGYKATELKKIEKKLAQEAGLTSEEYIKSALKLMMK.

The protein belongs to the RuvA family. As to quaternary structure, homotetramer. Forms an RuvA(8)-RuvB(12)-Holliday junction (HJ) complex. HJ DNA is sandwiched between 2 RuvA tetramers; dsDNA enters through RuvA and exits via RuvB. An RuvB hexamer assembles on each DNA strand where it exits the tetramer. Each RuvB hexamer is contacted by two RuvA subunits (via domain III) on 2 adjacent RuvB subunits; this complex drives branch migration. In the full resolvosome a probable DNA-RuvA(4)-RuvB(12)-RuvC(2) complex forms which resolves the HJ.

Its subcellular location is the cytoplasm. Its function is as follows. The RuvA-RuvB-RuvC complex processes Holliday junction (HJ) DNA during genetic recombination and DNA repair, while the RuvA-RuvB complex plays an important role in the rescue of blocked DNA replication forks via replication fork reversal (RFR). RuvA specifically binds to HJ cruciform DNA, conferring on it an open structure. The RuvB hexamer acts as an ATP-dependent pump, pulling dsDNA into and through the RuvAB complex. HJ branch migration allows RuvC to scan DNA until it finds its consensus sequence, where it cleaves and resolves the cruciform DNA. The chain is Holliday junction branch migration complex subunit RuvA from Lactococcus lactis subsp. cremoris (strain MG1363).